We begin with the raw amino-acid sequence, 481 residues long: Cobyric acid synthase (481 aa).

Positions 248 to 435 constitute a GATase cobBQ-type domain; the sequence is ALTVAWLAFS…LHGMFGADGF (188 aa). Cys-330 (nucleophile) is an active-site residue. Residue His-427 is part of the active site.

Belongs to the CobB/CobQ family. CobQ subfamily.

Its pathway is cofactor biosynthesis; adenosylcobalamin biosynthesis. Functionally, catalyzes amidations at positions B, D, E, and G on adenosylcobyrinic A,C-diamide. NH(2) groups are provided by glutamine, and one molecule of ATP is hydrogenolyzed for each amidation. The polypeptide is Cobyric acid synthase (Cereibacter sphaeroides (strain ATCC 17023 / DSM 158 / JCM 6121 / CCUG 31486 / LMG 2827 / NBRC 12203 / NCIMB 8253 / ATH 2.4.1.) (Rhodobacter sphaeroides)).